The sequence spans 388 residues: Mannitol-1-phosphate 5-dehydrogenase (388 aa).

5–16 (AIQFGGGNIGRG) contributes to the NAD(+) binding site. Residue lysine 213 is part of the active site.

Belongs to the mannitol dehydrogenase family. Monomer.

It catalyses the reaction D-mannitol 1-phosphate + NAD(+) = beta-D-fructose 6-phosphate + NADH + H(+). Catalyzes the NAD(H)-dependent interconversion of D-fructose 6-phosphate and D-mannitol 1-phosphate in the mannitol metabolic pathway. The polypeptide is Mannitol-1-phosphate 5-dehydrogenase (mpdA) (Aspergillus fumigatus (strain CBS 144.89 / FGSC A1163 / CEA10) (Neosartorya fumigata)).